The following is a 247-amino-acid chain: Terpene cyclase ausL (247 aa).

6 helical membrane-spanning segments follow: residues 49 to 69, 75 to 95, 114 to 134, 138 to 158, 171 to 191, and 206 to 226; these read AIAV…AWIY, HWQG…AATL, LVLL…CLAL, GALG…SGAV, SLVI…KLCI, and PMCW…PVLY.

This sequence belongs to the paxB family.

It is found in the membrane. It participates in secondary metabolite biosynthesis; terpenoid biosynthesis. Functionally, terpene cyclase; part of the gene cluster that mediates the biosynthesis of calidodehydroaustin, a fungal meroterpenoid. The first step of the pathway is the synthesis of 3,5-dimethylorsellinic acid by the polyketide synthase ausA. 3,5-dimethylorsellinic acid is then prenylated by the polyprenyl transferase ausN. Further epoxidation by the FAD-dependent monooxygenase ausM and cyclization by the probable terpene cyclase ausL lead to the formation of protoaustinoid A. Protoaustinoid A is then oxidized to spiro-lactone preaustinoid A3 by the combined action of the FAD-binding monooxygenases ausB and ausC, and the dioxygenase ausE. Acid-catalyzed keto-rearrangement and ring contraction of the tetraketide portion of preaustinoid A3 by ausJ lead to the formation of preaustinoid A4. The aldo-keto reductase ausK, with the help of ausH, is involved in the next step by transforming preaustinoid A4 into isoaustinone which is in turn hydroxylated by the P450 monooxygenase ausI to form austinolide. The cytochrome P450 monooxygenase ausG modifies austinolide to austinol. Austinol is further acetylated to austin by the O-acetyltransferase ausP, which spontaneously changes to dehydroaustin. The cytochrome P450 monooxygenase ausR then converts dehydroaustin is into 7-dehydrodehydroaustin. The hydroxylation catalyzed by ausR permits the O-acetyltransferase ausQ to add an additional acetyl group to the molecule, leading to the formation of acetoxydehydroaustin. The short chain dehydrogenase ausT catalyzes the reduction of the double bond present between carbon atoms 1 and 2 to convert 7-dehydrodehydroaustin into 1,2-dihydro-7-hydroxydehydroaustin. AusQ catalyzes not only an acetylation reaction but also the addition of the PKS ausV diketide product to 1,2-dihydro-7-hydroxydehydroaustin, forming precalidodehydroaustin. Finally, the iron/alpha-ketoglutarate-dependent dioxygenase converts precalidodehydroaustin into calidodehydroaustin. The polypeptide is Terpene cyclase ausL (Aspergillus calidoustus).